The chain runs to 123 residues: Small ribosomal subunit protein uS12 (123 aa).

Positions 1–31 are disordered; sequence MPTIQQLVRKGRHSKKAKVATAGLKGSPQRR. Positions 9–18 are enriched in basic residues; that stretch reads RKGRHSKKAK. Position 89 is a 3-methylthioaspartic acid (Asp-89).

The protein belongs to the universal ribosomal protein uS12 family. In terms of assembly, part of the 30S ribosomal subunit. Contacts proteins S8 and S17. May interact with IF1 in the 30S initiation complex.

Functionally, with S4 and S5 plays an important role in translational accuracy. Its function is as follows. Interacts with and stabilizes bases of the 16S rRNA that are involved in tRNA selection in the A site and with the mRNA backbone. Located at the interface of the 30S and 50S subunits, it traverses the body of the 30S subunit contacting proteins on the other side and probably holding the rRNA structure together. The combined cluster of proteins S8, S12 and S17 appears to hold together the shoulder and platform of the 30S subunit. This Corynebacterium aurimucosum (strain ATCC 700975 / DSM 44827 / CIP 107346 / CN-1) (Corynebacterium nigricans) protein is Small ribosomal subunit protein uS12.